A 369-amino-acid chain; its full sequence is Probable peptidoglycan glycosyltransferase FtsW (369 aa).

Helical transmembrane passes span leucine 11–valine 31, asparagine 48–tyrosine 68, leucine 77–glycine 97, threonine 134–leucine 151, proline 154–glycine 174, phenylalanine 177–phenylalanine 197, leucine 265–methionine 285, and isoleucine 306–proline 326.

Belongs to the SEDS family. FtsW subfamily.

The protein localises to the cell inner membrane. The catalysed reaction is [GlcNAc-(1-&gt;4)-Mur2Ac(oyl-L-Ala-gamma-D-Glu-L-Lys-D-Ala-D-Ala)](n)-di-trans,octa-cis-undecaprenyl diphosphate + beta-D-GlcNAc-(1-&gt;4)-Mur2Ac(oyl-L-Ala-gamma-D-Glu-L-Lys-D-Ala-D-Ala)-di-trans,octa-cis-undecaprenyl diphosphate = [GlcNAc-(1-&gt;4)-Mur2Ac(oyl-L-Ala-gamma-D-Glu-L-Lys-D-Ala-D-Ala)](n+1)-di-trans,octa-cis-undecaprenyl diphosphate + di-trans,octa-cis-undecaprenyl diphosphate + H(+). Its pathway is cell wall biogenesis; peptidoglycan biosynthesis. Its function is as follows. Peptidoglycan polymerase that is essential for cell division. This Riesia pediculicola (strain USDA) protein is Probable peptidoglycan glycosyltransferase FtsW.